The primary structure comprises 415 residues: Serine hydroxymethyltransferase (415 aa).

Residues leucine 117 and 121 to 123 (GHL) contribute to the (6S)-5,6,7,8-tetrahydrofolate site. Lysine 226 carries the N6-(pyridoxal phosphate)lysine modification. (6S)-5,6,7,8-tetrahydrofolate-binding positions include glutamate 241 and 349–351 (SPF).

This sequence belongs to the SHMT family. Homodimer. Pyridoxal 5'-phosphate is required as a cofactor.

It localises to the cytoplasm. The catalysed reaction is (6R)-5,10-methylene-5,6,7,8-tetrahydrofolate + glycine + H2O = (6S)-5,6,7,8-tetrahydrofolate + L-serine. The protein operates within one-carbon metabolism; tetrahydrofolate interconversion. It participates in amino-acid biosynthesis; glycine biosynthesis; glycine from L-serine: step 1/1. Its function is as follows. Catalyzes the reversible interconversion of serine and glycine with tetrahydrofolate (THF) serving as the one-carbon carrier. This reaction serves as the major source of one-carbon groups required for the biosynthesis of purines, thymidylate, methionine, and other important biomolecules. Also exhibits THF-independent aldolase activity toward beta-hydroxyamino acids, producing glycine and aldehydes, via a retro-aldol mechanism. The protein is Serine hydroxymethyltransferase of Geotalea uraniireducens (strain Rf4) (Geobacter uraniireducens).